We begin with the raw amino-acid sequence, 93 residues long: Small integral membrane protein 41 (93 aa).

The helical transmembrane segment at V38–L58 threads the bilayer. Residues R71–E80 are compositionally biased toward basic and acidic residues. Residues R71–S93 are disordered.

The protein localises to the membrane. This Homo sapiens (Human) protein is Small integral membrane protein 41.